The following is a 399-amino-acid chain: Glutathione S-transferase LANCL1 (399 aa).

Alanine 2 bears the N-acetylalanine mark. Lysine 142 is subject to N6-acetyllysine. Residue cysteine 276 participates in Zn(2+) binding. Lysine 317 lines the glutathione pocket. 2 residues coordinate Zn(2+): cysteine 322 and histidine 323. 364–367 is a binding site for glutathione; sequence RTPD.

It belongs to the LanC-like protein family. Interacts with the C-terminal of STOM. Interacts with the EPS8 SH3 domain. Interaction with EPS8 is inhibited by glutathione binding. In terms of assembly, (Microbial infection) Interacts with P.falciparum SBP1. Detected in erythrocytes, brain, kidney, testis, ovary, heart, lung, placenta and spleen (at protein level). Ubiquitous. Strongly expressed in brain, spinal cord, pituitary gland, kidney, heart, skeletal muscle, pancreas, ovary and testis.

It is found in the cytoplasm. Its subcellular location is the cell membrane. The catalysed reaction is RX + glutathione = an S-substituted glutathione + a halide anion + H(+). It carries out the reaction 1-chloro-2,4-dinitrobenzene + glutathione = 2,4-dinitrophenyl-S-glutathione + chloride + H(+). Its function is as follows. Functions as a glutathione transferase. Catalyzes conjugation of the glutathione (GSH) to artificial substrates 1-chloro-2,4-dinitrobenzene (CDNB) and p-nitrophenyl acetate. Mitigates neuronal oxidative stress during normal postnatal development and in response to oxidative stresses probably through GSH antioxidant defense mechanism. May play a role in EPS8 signaling. Binds glutathione. The sequence is that of Glutathione S-transferase LANCL1 from Homo sapiens (Human).